Consider the following 458-residue polypeptide: tRNA modification GTPase MnmE (458 aa).

Residues R26, E88, and R127 each coordinate (6S)-5-formyl-5,6,7,8-tetrahydrofolate. Residues 224–378 (GLSTAIIGRP…IEERINDIFF (155 aa)) enclose the TrmE-type G domain. N234 is a binding site for K(+). GTP-binding positions include 234–239 (NVGKSS), 253–259 (TDIEGTT), and 278–281 (DTAG). Residue S238 participates in Mg(2+) binding. Residues T253, I255, and T258 each contribute to the K(+) site. Position 259 (T259) interacts with Mg(2+). K458 lines the (6S)-5-formyl-5,6,7,8-tetrahydrofolate pocket.

Belongs to the TRAFAC class TrmE-Era-EngA-EngB-Septin-like GTPase superfamily. TrmE GTPase family. Homodimer. Heterotetramer of two MnmE and two MnmG subunits. The cofactor is K(+).

It localises to the cytoplasm. Its function is as follows. Exhibits a very high intrinsic GTPase hydrolysis rate. Involved in the addition of a carboxymethylaminomethyl (cmnm) group at the wobble position (U34) of certain tRNAs, forming tRNA-cmnm(5)s(2)U34. The sequence is that of tRNA modification GTPase MnmE from Streptococcus agalactiae serotype III (strain NEM316).